A 412-amino-acid polypeptide reads, in one-letter code: Subtilisin-like protease 6 (412 aa).

The N-terminal stretch at M1–G20 is a signal peptide. The propeptide occupies A21–L127. In terms of domain architecture, Inhibitor I9 spans K36–T120. A Peptidase S8 domain is found at S135 to K412. Residues D167 and H198 each act as charge relay system in the active site. N-linked (GlcNAc...) asparagine glycosylation is found at N252 and N264. S358 (charge relay system) is an active-site residue. N408 carries an N-linked (GlcNAc...) asparagine glycan.

It belongs to the peptidase S8 family.

Its subcellular location is the secreted. Secreted subtilisin-like serine protease with keratinolytic activity that contributes to pathogenicity. The sequence is that of Subtilisin-like protease 6 (SUB6) from Arthroderma benhamiae (strain ATCC MYA-4681 / CBS 112371) (Trichophyton mentagrophytes).